We begin with the raw amino-acid sequence, 280 residues long: 3-methyl-2-oxobutanoate hydroxymethyltransferase (280 aa).

Mg(2+) contacts are provided by Asp61 and Asp100. Residues 61–62 (DS), Asp100, and Lys130 each bind 3-methyl-2-oxobutanoate. Residue Glu132 coordinates Mg(2+). Glu198 serves as the catalytic Proton acceptor.

The protein belongs to the PanB family. As to quaternary structure, homodecamer; pentamer of dimers. The cofactor is Mg(2+).

It localises to the cytoplasm. It catalyses the reaction 3-methyl-2-oxobutanoate + (6R)-5,10-methylene-5,6,7,8-tetrahydrofolate + H2O = 2-dehydropantoate + (6S)-5,6,7,8-tetrahydrofolate. Its pathway is cofactor biosynthesis; (R)-pantothenate biosynthesis; (R)-pantoate from 3-methyl-2-oxobutanoate: step 1/2. Catalyzes the reversible reaction in which hydroxymethyl group from 5,10-methylenetetrahydrofolate is transferred onto alpha-ketoisovalerate to form ketopantoate. This Mycolicibacterium vanbaalenii (strain DSM 7251 / JCM 13017 / BCRC 16820 / KCTC 9966 / NRRL B-24157 / PYR-1) (Mycobacterium vanbaalenii) protein is 3-methyl-2-oxobutanoate hydroxymethyltransferase.